We begin with the raw amino-acid sequence, 236 residues long: CDP-diacylglycerol--glycerol-3-phosphate 3-phosphatidyltransferase (236 aa).

The next 5 membrane-spanning stretches (helical) occupy residues 39 to 59, 66 to 86, 120 to 140, 163 to 183, and 196 to 216; these read IFIA…GVLA, ISIS…TAVI, VLIA…VFIV, WLGK…CFVW, and GLFF…FSIW.

Belongs to the CDP-alcohol phosphatidyltransferase class-I family.

The protein localises to the cell membrane. It carries out the reaction a CDP-1,2-diacyl-sn-glycerol + sn-glycerol 3-phosphate = a 1,2-diacyl-sn-glycero-3-phospho-(1'-sn-glycero-3'-phosphate) + CMP + H(+). It functions in the pathway phospholipid metabolism; phosphatidylglycerol biosynthesis; phosphatidylglycerol from CDP-diacylglycerol: step 1/2. In terms of biological role, this protein catalyzes the committed step to the synthesis of the acidic phospholipids. This chain is CDP-diacylglycerol--glycerol-3-phosphate 3-phosphatidyltransferase (pgsA), found in Mycoplasma genitalium (strain ATCC 33530 / DSM 19775 / NCTC 10195 / G37) (Mycoplasmoides genitalium).